We begin with the raw amino-acid sequence, 121 residues long: Ribonuclease P protein component (121 aa).

It belongs to the RnpA family. As to quaternary structure, consists of a catalytic RNA component (M1 or rnpB) and a protein subunit.

It carries out the reaction Endonucleolytic cleavage of RNA, removing 5'-extranucleotides from tRNA precursor.. Its function is as follows. RNaseP catalyzes the removal of the 5'-leader sequence from pre-tRNA to produce the mature 5'-terminus. It can also cleave other RNA substrates such as 4.5S RNA. The protein component plays an auxiliary but essential role in vivo by binding to the 5'-leader sequence and broadening the substrate specificity of the ribozyme. The polypeptide is Ribonuclease P protein component (Neisseria gonorrhoeae (strain ATCC 700825 / FA 1090)).